Consider the following 388-residue polypeptide: Probable aspartic-type endopeptidase MCYG_06955 (388 aa).

The first 21 residues, 1-21 (MMGPFFYFTAYVSLLFAFTQA), serve as a signal peptide directing secretion. Residues Asn82 and Asn104 are each glycosylated (N-linked (GlcNAc...) asparagine). Positions 96–384 (FVNEITVGND…DYDGPKIGFA (289 aa)) constitute a Peptidase A1 domain. Residue Asp112 is part of the active site. 2 N-linked (GlcNAc...) asparagine glycosylation sites follow: Asn209 and Asn261. The active site involves Asp278. Residues Asn315 and Asn320 are each glycosylated (N-linked (GlcNAc...) asparagine).

It belongs to the peptidase A1 family.

The protein localises to the secreted. Functionally, probable aspartic-type endopeptidase which contributes to virulence. The chain is Probable aspartic-type endopeptidase MCYG_06955 from Arthroderma otae (strain ATCC MYA-4605 / CBS 113480) (Microsporum canis).